Consider the following 114-residue polypeptide: uncharacterized protein (114 aa).

The next 3 membrane-spanning stretches (helical) occupy residues 21 to 41, 65 to 85, and 93 to 113; these read LASS…VCLF, GCFS…SALI, and LSVF…ILTD.

It is found in the membrane. This is an uncharacterized protein from Saccharomyces cerevisiae (strain ATCC 204508 / S288c) (Baker's yeast).